Here is a 243-residue protein sequence, read N- to C-terminus: Pyridoxine 5'-phosphate synthase (243 aa).

Asparagine 9 serves as a coordination point for 3-amino-2-oxopropyl phosphate. A 1-deoxy-D-xylulose 5-phosphate-binding site is contributed by 11–12 (DH). Arginine 20 is a binding site for 3-amino-2-oxopropyl phosphate. Catalysis depends on histidine 45, which acts as the Proton acceptor. 1-deoxy-D-xylulose 5-phosphate is bound by residues arginine 47 and histidine 52. Glutamate 72 (proton acceptor) is an active-site residue. Residue threonine 102 participates in 1-deoxy-D-xylulose 5-phosphate binding. Residue histidine 193 is the Proton donor of the active site. Residues glycine 194 and 215-216 (GH) each bind 3-amino-2-oxopropyl phosphate.

It belongs to the PNP synthase family. Homooctamer; tetramer of dimers.

Its subcellular location is the cytoplasm. The catalysed reaction is 3-amino-2-oxopropyl phosphate + 1-deoxy-D-xylulose 5-phosphate = pyridoxine 5'-phosphate + phosphate + 2 H2O + H(+). The protein operates within cofactor biosynthesis; pyridoxine 5'-phosphate biosynthesis; pyridoxine 5'-phosphate from D-erythrose 4-phosphate: step 5/5. In terms of biological role, catalyzes the complicated ring closure reaction between the two acyclic compounds 1-deoxy-D-xylulose-5-phosphate (DXP) and 3-amino-2-oxopropyl phosphate (1-amino-acetone-3-phosphate or AAP) to form pyridoxine 5'-phosphate (PNP) and inorganic phosphate. In Vibrio cholerae serotype O1 (strain ATCC 39315 / El Tor Inaba N16961), this protein is Pyridoxine 5'-phosphate synthase.